Reading from the N-terminus, the 134-residue chain is ATP synthase epsilon chain (134 aa).

This sequence belongs to the ATPase epsilon chain family. As to quaternary structure, F-type ATPases have 2 components, CF(1) - the catalytic core - and CF(0) - the membrane proton channel. CF(1) has five subunits: alpha(3), beta(3), gamma(1), delta(1), epsilon(1). CF(0) has three main subunits: a, b and c.

It is found in the cellular thylakoid membrane. In terms of biological role, produces ATP from ADP in the presence of a proton gradient across the membrane. The polypeptide is ATP synthase epsilon chain (Prochlorococcus marinus (strain MIT 9301)).